The sequence spans 301 residues: Acetylglutamate kinase (301 aa).

Substrate-binding positions include 68–69 (GG), Arg90, and Asn197.

The protein belongs to the acetylglutamate kinase family. ArgB subfamily.

It is found in the cytoplasm. The catalysed reaction is N-acetyl-L-glutamate + ATP = N-acetyl-L-glutamyl 5-phosphate + ADP. It functions in the pathway amino-acid biosynthesis; L-arginine biosynthesis; N(2)-acetyl-L-ornithine from L-glutamate: step 2/4. Its function is as follows. Catalyzes the ATP-dependent phosphorylation of N-acetyl-L-glutamate. The chain is Acetylglutamate kinase from Nitrosococcus oceani (strain ATCC 19707 / BCRC 17464 / JCM 30415 / NCIMB 11848 / C-107).